Consider the following 524-residue polypeptide: GMP synthase [glutamine-hydrolyzing] (524 aa).

The Glutamine amidotransferase type-1 domain occupies 8 to 206 (KILILDFGSQ…VRKLCQCEAR (199 aa)). C85 functions as the Nucleophile in the catalytic mechanism. Catalysis depends on residues H180 and E182. A GMPS ATP-PPase domain is found at 207–399 (WTTGNIVEDA…LGLPYEMVYR (193 aa)). Position 234–240 (234–240 (SGGVDSS)) interacts with ATP.

As to quaternary structure, homodimer.

It carries out the reaction XMP + L-glutamine + ATP + H2O = GMP + L-glutamate + AMP + diphosphate + 2 H(+). It functions in the pathway purine metabolism; GMP biosynthesis; GMP from XMP (L-Gln route): step 1/1. Its function is as follows. Catalyzes the synthesis of GMP from XMP. In Methylococcus capsulatus (strain ATCC 33009 / NCIMB 11132 / Bath), this protein is GMP synthase [glutamine-hydrolyzing].